We begin with the raw amino-acid sequence, 472 residues long: Glycogen synthase (472 aa).

An ADP-alpha-D-glucose-binding site is contributed by K16.

Belongs to the glycosyltransferase 1 family. Bacterial/plant glycogen synthase subfamily.

The enzyme catalyses [(1-&gt;4)-alpha-D-glucosyl](n) + ADP-alpha-D-glucose = [(1-&gt;4)-alpha-D-glucosyl](n+1) + ADP + H(+). The protein operates within glycan biosynthesis; glycogen biosynthesis. Functionally, synthesizes alpha-1,4-glucan chains using ADP-glucose. The sequence is that of Glycogen synthase from Jannaschia sp. (strain CCS1).